We begin with the raw amino-acid sequence, 82 residues long: U24 protein (82 aa).

The PPXY motif motif lies at 7 to 10 (PPSY). A helical membrane pass occupies residues 52–72 (FIILACLIISVILCLILILHI).

Interacts with host ITCH; this interaction probably mediates ITCH degradation. Interacts probably with NEDD4.

The protein localises to the membrane. Down-regulates of the TCR/CD3E complex and the transferrin receptor TFRC in host T-cells by blocking them from recycling back to the cell surface. This chain is U24 protein, found in Homo sapiens (Human).